A 94-amino-acid chain; its full sequence is Large ribosomal subunit protein uL23 (94 aa).

It belongs to the universal ribosomal protein uL23 family. As to quaternary structure, part of the 50S ribosomal subunit. Contacts protein L29, and trigger factor when it is bound to the ribosome.

One of the early assembly proteins it binds 23S rRNA. One of the proteins that surrounds the polypeptide exit tunnel on the outside of the ribosome. Forms the main docking site for trigger factor binding to the ribosome. In Pelobacter propionicus (strain DSM 2379 / NBRC 103807 / OttBd1), this protein is Large ribosomal subunit protein uL23.